Reading from the N-terminus, the 289-residue chain is BTB/POZ domain-containing protein KCTD7 (289 aa).

Residues 1 to 40 (MVVVTGREPDSRRPDGAMSSSDAEDDFLEPATPTATQAGH) form a disordered region. The BTB domain maps to 53 to 141 (VPLNIGGAHF…YAIGPLLEQL (89 aa)).

Interacts with CUL3.

It localises to the cell membrane. Its subcellular location is the cytoplasm. The protein resides in the cytosol. In terms of biological role, may be involved in the control of excitability of cortical neurons. The chain is BTB/POZ domain-containing protein KCTD7 (KCTD7) from Bos taurus (Bovine).